We begin with the raw amino-acid sequence, 333 residues long: Tryptophan--tRNA ligase (333 aa).

Residues Q9–T11 and G17–N18 each bind ATP. The 'HIGH' region motif lies at P10–N18. D140 lines the L-tryptophan pocket. ATP-binding positions include G152 to D154, I191, and K200 to S204. The 'KMSKS' region motif lies at K200–S204.

It belongs to the class-I aminoacyl-tRNA synthetase family. Homodimer.

It is found in the cytoplasm. It catalyses the reaction tRNA(Trp) + L-tryptophan + ATP = L-tryptophyl-tRNA(Trp) + AMP + diphosphate + H(+). Catalyzes the attachment of tryptophan to tRNA(Trp). This chain is Tryptophan--tRNA ligase, found in Ureaplasma parvum serovar 3 (strain ATCC 700970).